The chain runs to 121 residues: Large ribosomal subunit protein bL12 (121 aa).

This sequence belongs to the bacterial ribosomal protein bL12 family. Homodimer. Part of the ribosomal stalk of the 50S ribosomal subunit. Forms a multimeric L10(L12)X complex, where L10 forms an elongated spine to which 2 to 4 L12 dimers bind in a sequential fashion. Binds GTP-bound translation factors.

In terms of biological role, forms part of the ribosomal stalk which helps the ribosome interact with GTP-bound translation factors. Is thus essential for accurate translation. This Streptococcus agalactiae serotype Ia (strain ATCC 27591 / A909 / CDC SS700) protein is Large ribosomal subunit protein bL12.